Here is an 849-residue protein sequence, read N- to C-terminus: MESGPRVEPGPGAPAAVLARIPQEPRPSPEGDPSPPPPPTPMSALVPDTPPDTPPAMKNASTPQQLPLEPVSPTGQVSPQPAPPPDECPSSEAKSRGPTPTATGPRDAKPSQRSSQPSPTAVPASDSPSAKQDVKKAGERHKLAKERREERAKYLAAKKAVWLEKEEKAKALREKQLQERRRRLEEQRLKAEQRRAALEERQRQKLEKNKERYEAAIQRSVKKTWAEIRQQRWSWAGALHHNSPGRKTSGSRCSVSAVNLPKHVDSIINKRLSKSSATLWNSPSRNRSLQLSAWESSIVDRLMTPTLSFLARSRSAVTLPRNGRDQGRGSGPGRRPTRARAGASLAPGPHPDRTHPSAAVPVCPRSASASPLTPCSAPRSAHRCTPSGERPERRKPGAGGSPALVRRRLEATPVQKKEKKDKERENEKEKSALARERNLKKRQSLPASIRPRISTGAELSTKSKARPTSPSTTWHRPASPCPSPGPGHTLPPKPPSPRGTTASPKGRIRRKEEAKESPSPSGPEDKNHSKSRTAEEKEPAAPASPAPSPVPSPTPAQPQKEQSSTQIPPDTAVPAVPTVPTFPTAPPTAAPSVTPSKPMAGTTDREEATRLLAEKRRQAREQREREEQERKLQAERDKRMREEQLAREAEARAEREAEARRREEQEAREKAQAEQEEQERLQKQKEEAEARSREEAERQRLEREKHFQKEEQERQERRKRLEEIMKRTRKSEAAETKKQDGKETMANNSGPDPVKAVETRPSGLQKDSMQKEELAPQEPQWSLPSKEMPGSLVNGLQPLPAHQENGFPAKGTAGDKSLGRAAEGLLPFAEADAFLKKAVVQPPQVTEVL.

Disordered regions lie at residues 1–151 (MESG…REER) and 186–210 (EQRLKAEQRRAALEERQRQKLEKNK). Residues 24–41 (EPRPSPEGDPSPPPPPTP) are compositionally biased toward pro residues. Residues T49 and T53 each carry the phosphothreonine modification. Phosphoserine occurs at positions 72 and 95. At T99 the chain carries Phosphothreonine. Phosphoserine occurs at positions 115 and 118. The residue at position 120 (T120) is a Phosphothreonine. Phosphoserine is present on residues S125 and S127. Residues 132 to 151 (QDVKKAGERHKLAKERREER) show a composition bias toward basic and acidic residues. Residues 167–223 (EKAKALREKQLQERRRRLEEQRLKAEQRRAALEERQRQKLEKNKERYEAAIQRSVKK) are a coiled coil. Residues S256, S275, S315, S368, and S401 each carry the phosphoserine modification. Residues 318–815 (TLPRNGRDQG…GFPAKGTAGD (498 aa)) form a disordered region. Residues 407–437 (RRLEATPVQKKEKKDKERENEKEKSALARER) show a composition bias toward basic and acidic residues. Phosphoserine occurs at positions 444, 448, 454, and 460. A compositionally biased stretch (polar residues) spans 457–474 (AELSTKSKARPTSPSTTW). A Glycyl lysine isopeptide (Lys-Gly) (interchain with G-Cter in SUMO2) cross-link involves residue K462. S479 and S496 each carry phosphoserine. Residues 479 to 497 (SPCPSPGPGHTLPPKPPSP) are compositionally biased toward pro residues. The span at 523–539 (PEDKNHSKSRTAEEKEP) shows a compositional bias: basic and acidic residues. The span at 542-556 (PASPAPSPVPSPTPA) shows a compositional bias: pro residues. Residues S544, S548, and S552 each carry the phosphoserine modification. Residue T554 is modified to Phosphothreonine. Over residues 568–582 (PPDTAVPAVPTVPTF) the composition is skewed to low complexity. The stretch at 602–724 (TTDREEATRL…QERRKRLEEI (123 aa)) forms a coiled coil. Over residues 603 to 743 (TDREEATRLL…AETKKQDGKE (141 aa)) the composition is skewed to basic and acidic residues.

It belongs to the MAP7 family.

The protein localises to the cytoplasm. It localises to the cytoskeleton. It is found in the spindle. The protein resides in the microtubule organizing center. Its subcellular location is the centrosome. The protein localises to the midbody. In terms of biological role, microtubule-stabilizing protein involved in the control of cell motility and neurite outgrowth. Facilitate microtubule stabilization through the maintenance of acetylated stable microtubules. This chain is MAP7 domain-containing protein 1 (Map7d1), found in Rattus norvegicus (Rat).